We begin with the raw amino-acid sequence, 151 residues long: RNA polymerase-binding transcription factor DksA (151 aa).

4 residues coordinate Zn(2+): Cys114, Cys117, Cys135, and Cys138. The dksA C4-type zinc finger occupies 114 to 138 (CNSCSVEIGIRRLEARPTADLCIDC).

The protein belongs to the DksA family. As to quaternary structure, interacts directly with the RNA polymerase.

Its subcellular location is the cytoplasm. Its function is as follows. Transcription factor that acts by binding directly to the RNA polymerase (RNAP). Required for negative regulation of rRNA expression and positive regulation of several amino acid biosynthesis promoters. Also required for regulation of fis expression. The chain is RNA polymerase-binding transcription factor DksA from Buchnera aphidicola subsp. Acyrthosiphon pisum (strain APS) (Acyrthosiphon pisum symbiotic bacterium).